The chain runs to 170 residues: Histone H1.9 (170 aa).

The region spanning 34–108 is the H15 domain; that stretch reads RKPTMSYVIL…GASGSLCLCK (75 aa). At Ser-56 the chain carries Phosphoserine. The interval 118–140 is disordered; that stretch reads AKRCQDRQKSQKPQKPGQRESEP.

The protein belongs to the histone H1/H5 family. In terms of tissue distribution, expressed exclusively in the testis by haploid germ cells (at protein level).

The protein resides in the nucleus. It localises to the chromosome. Its function is as follows. DNA-binding protein that may be implicated in chromatin remodeling and/or transcriptional regulation during spermiogenesis, the process of spermatid maturation into spermatozoa. In Mus musculus (Mouse), this protein is Histone H1.9.